The primary structure comprises 450 residues: MRECISIHVGQAGVQIGNACWELYCLEHGIQPDGQMPSDKTVGGGDDSFNTFFSETGAGKHVPRAVFVDLEPTVVDEVRTGTYRQLFHPEQLITGKEDAANNYARGHYTIGKEIVDLVLDRIRKLADQCTGLQGFLIFHSFGGGTGSGFTSLLMERLSVDYGKKSKLEFAVYPAPQVSTAVVEPYNSILTTHTTLEHSDCAFMVDNEAIYDICRRNLDIERPTYTNLNRLIGQIVSSITASLRFDGALNVDLTEFQTNLVPYPRIHFPLVTYAPVISAEKAYHEQLSVAEITNACFEPANQMVKVDPRHGKYMACCMLYRGDVVPKDVNAAIATIKTKRTIQFVDWCPTGFKVGINYQPPTVVPGGDLAKVQRAVCMLSNTTAIAEAWARLDHKFDLMYAKRAFVHWYVGEGMEEGEFSEAREDLAALEKDYEEVGMDSGDGEGEGAEEY.

Residue glutamine 11 coordinates GTP. Lysine 40 is subject to N6-acetyllysine. The GTP site is built by glutamate 71, serine 140, glycine 144, threonine 145, threonine 179, asparagine 206, and asparagine 228. Position 71 (glutamate 71) interacts with Mg(2+). Residue glutamate 254 is part of the active site.

It belongs to the tubulin family. In terms of assembly, dimer of alpha and beta chains. A typical microtubule is a hollow water-filled tube with an outer diameter of 25 nm and an inner diameter of 15 nM. Alpha-beta heterodimers associate head-to-tail to form protofilaments running lengthwise along the microtubule wall with the beta-tubulin subunit facing the microtubule plus end conferring a structural polarity. Microtubules usually have 13 protofilaments but different protofilament numbers can be found in some organisms and specialized cells. Mg(2+) serves as cofactor. Undergoes a tyrosination/detyrosination cycle, the cyclic removal and re-addition of a C-terminal tyrosine residue by the enzymes tubulin tyrosine carboxypeptidase (TTCP) and tubulin tyrosine ligase (TTL), respectively. In terms of processing, acetylation of alpha chains at Lys-40 stabilizes microtubules and affects affinity and processivity of microtubule motors. This modification has a role in multiple cellular functions, ranging from cell motility, cell cycle progression or cell differentiation to intracellular trafficking and signaling. During the early stages of oogenesis lky/Alpha-tubulin N-acetyltransferase 2 is the main acetyltransferase responsible for Lys-40 acetylation in germline cells while Atat/alpha-tubulin N-acetyltransferase 1 is the main acetyltransferase responsible for Lys-40 acetylation in somatic cells.

It localises to the cytoplasm. The protein resides in the cytoskeleton. It carries out the reaction GTP + H2O = GDP + phosphate + H(+). In terms of biological role, tubulin is the major constituent of microtubules, a cylinder consisting of laterally associated linear protofilaments composed of alpha- and beta-tubulin heterodimers. Microtubules grow by the addition of GTP-tubulin dimers to the microtubule end, where a stabilizing cap forms. Below the cap, tubulin dimers are in GDP-bound state, owing to GTPase activity of alpha-tubulin. The chain is Tubulin alpha-3 chain (alphaTub84D) from Drosophila melanogaster (Fruit fly).